The sequence spans 439 residues: Glutamate-1-semialdehyde 2,1-aminomutase (439 aa).

Lys273 is subject to N6-(pyridoxal phosphate)lysine.

Belongs to the class-III pyridoxal-phosphate-dependent aminotransferase family. HemL subfamily. In terms of assembly, homodimer. It depends on pyridoxal 5'-phosphate as a cofactor.

It localises to the cytoplasm. The enzyme catalyses (S)-4-amino-5-oxopentanoate = 5-aminolevulinate. It participates in porphyrin-containing compound metabolism; protoporphyrin-IX biosynthesis; 5-aminolevulinate from L-glutamyl-tRNA(Glu): step 2/2. This is Glutamate-1-semialdehyde 2,1-aminomutase from Paenarthrobacter aurescens (strain TC1).